We begin with the raw amino-acid sequence, 586 residues long: MCGILAVLGCSDDSQAKRVRVLELSRRLKHRGPDWSGLHQHGDNFLAHQRLAIVDPASGDQPLFNEDQSIIVTVNGEIFNHEELRKQLPNHKFRTGCDCDVIAHLYEEHGENFVDMLDGIFSFVLLDTRDNSFLVARDAIGVTSLYIGYGLDGSVWIASELKGLNDDCEHFELFPPGHLYSSKEKEFRRWYNPPWFSEAIPSAPYDPLALRQAFEKAIIKRLMTDVPFGVLLSGGLDSSLVASVTARYLADTKAAKQWGSKLHSFCVGLEGAPDLKAAREVADYIGTVHHEFQYTIQDGIDAIEDVIYHVETYDVTTIRAGTPMFLMSRKIKSLGVKMVLSGEGSDEIFAGYLYFHKAPNKEELHQETCSKIKALHKYDCLRANKSTYAWGLEARVPFLDKKFIDVAMGIDPENKMIKRDEGRIEKWVLRKAFDDEENPYLPKHILYRQKEQFSDGVGYGWIDGLKDHAAKHVTDKMMLNASNIYPFNTPNTKEAYYYRMIFERFFPQNSARLSVPGGASIACSTEKAIEWDAAWSNNLDPSGRAALGVHDSAYDDQLNKSVSKGVEPEKIIPKMEVSPLGVAILS.

The For GATase activity role is filled by Cys2. Positions 2–185 (CGILAVLGCS…PGHLYSSKEK (184 aa)) constitute a Glutamine amidotransferase type-2 domain. L-glutamine contacts are provided by residues 50–54 (RLAIV), 75–77 (NGE), and Asp98. An Asparagine synthetase domain is found at 193–516 (PPWFSEAIPS…PQNSARLSVP (324 aa)). ATP contacts are provided by residues Leu231, Val267, and 341–342 (SG).

The enzyme catalyses L-aspartate + L-glutamine + ATP + H2O = L-asparagine + L-glutamate + AMP + diphosphate + H(+). The protein operates within amino-acid biosynthesis; L-asparagine biosynthesis; L-asparagine from L-aspartate (L-Gln route): step 1/1. The protein is Asparagine synthetase [glutamine-hydrolyzing] 2 (AS2) of Lotus japonicus (Lotus corniculatus var. japonicus).